We begin with the raw amino-acid sequence, 464 residues long: MPPAPPDQKPCHQLQPAPYRALSESILFGSVDEERWWHSTAPILSRLLISSNYDVDVQYKYLSLYRHLVLPALGPYPQRDPETGIIATQWRSGMVLTGLPIEFSNNVARALIRIGVDPVTADSGTAQDPFNTTRPKVYLETAARLLPGVDLTRFYEFETELVITKAEEAVLQANPDLFRSPWKSQILTAMDLQKSGTVLVKAYFYPQPKSAVTGRSTEDLLVNAIRKVDREGRFETQLANLQRYIERRRRGLHVPGVTADKPPATAADKAFDACSFFPHFLSTDLVEPGKSRVKFYASERHVNLQMVEDIWTFGGLRRDPDALRGLELLRHFWADIQMREGYYTMPRGFCELGKSSAGFEAPMMFHFHLDGSQSPFPDPQMYVCVFGMNSRKLVEGLTTFYRRVGWEEMASHYQGNFLANYPDEDFEKAAHLCAYVSFAYKNGGAYVTLYNHSFNPVGDVSFPN.

M94 and E102 together coordinate brevianamide F. Dimethylallyl diphosphate contacts are provided by R113, K201, and Y203. Y205 lines the brevianamide F pocket. Dimethylallyl diphosphate is bound by residues K294, Y296, Q380, Y382, Y446, and Y450.

Belongs to the tryptophan dimethylallyltransferase family.

It catalyses the reaction brevianamide F + dimethylallyl diphosphate = tryprostatin B + diphosphate. Its pathway is mycotoxin biosynthesis. Its function is as follows. Brevianamide F prenyltransferase; part of the gene cluster that mediates the biosynthesis of fumitremorgins, indole alkaloids that carry not only intriguing chemical structures, but also interesting biological and pharmacological activities. The biosynthesis of fumitremorgin-type alkaloids begins by condensation of the two amino acids L-tryptophan and L-proline to brevianamide F, catalyzed by the non-ribosomal peptide synthetase ftmA. Brevianamide F is then prenylated by the prenyltransferase ftmPT1/ftmB in the presence of dimethylallyl diphosphate, resulting in the formation of tryprostatin B. The three cytochrome P450 monooxygenases, ftmP450-1/ftmC, ftmP450-2/ftmE and ftmP450-3/FtmG, are responsible for the conversion of tryprostatin B to 6-hydroxytryprostatin B, tryprostatin A to fumitremorgin C and fumitremorgin C to 12,13-dihydroxyfumitremorgin C, respectively. The putative methyltransferase ftmMT/ftmD is expected for the conversion of 6-hydroxytryprostatin B to tryprostatin A. FtmPT2/FtmH catalyzes the prenylation of 12,13-dihydroxyfumitre-morgin C in the presence of dimethylallyl diphosphate, resulting in the formation of fumitremorgin B. Fumitremorgin B is further converted to verruculogen by ftmOx1/ftmF via the insertion of an endoperoxide bond between the two prenyl moieties. In some fungal species, verruculogen is further converted to fumitremorgin A, but the enzymes involved in this step have not been identified yet. This Aspergillus fumigatus (Neosartorya fumigata) protein is Tryprostatin B synthase.